The following is a 172-amino-acid chain: Stellate protein CG33239/CG33241 (172 aa).

The protein belongs to the casein kinase 2 subunit beta family. Interacts in vitro with the casein kinase 2 alpha subunit (CkII-alpha). The relevance of such interaction is however unclear in vivo. As to expression, probably not expressed in wild-type flies. In males lacking the Y chromosome, it is testis-specific and constitutes the main component of star-shaped crystals.

Unknown. In males lacking the Y chromosome, its strong overexpression leads to the appearance of proteinaceous star-shaped crystals in the primary spermatocytes causing meiotic drive, possibly by interfering with normal casein kinase 2 activity. The chain is Stellate protein CG33239/CG33241 (Ste:CG33239) from Drosophila melanogaster (Fruit fly).